Reading from the N-terminus, the 504-residue chain is Argininosuccinate lyase 2 (504 aa).

The protein belongs to the lyase 1 family. Argininosuccinate lyase subfamily.

The protein localises to the cytoplasm. The enzyme catalyses 2-(N(omega)-L-arginino)succinate = fumarate + L-arginine. Its pathway is amino-acid biosynthesis; L-arginine biosynthesis; L-arginine from L-ornithine and carbamoyl phosphate: step 3/3. The protein is Argininosuccinate lyase 2 of Agrobacterium fabrum (strain C58 / ATCC 33970) (Agrobacterium tumefaciens (strain C58)).